The chain runs to 58 residues: ComX pheromone (58 aa).

Residues 1 to 52 (MKQDMIDYLMKNPQVLTKLENGEASLIGIPDKLIPSIVDIFNKKMTLSKKCK) constitute a propeptide that is removed on maturation. The 3'-geranyl-2',N2-cyclotryptophan; in strain RO-E-2 /NRRL B-23055 moiety is linked to residue tryptophan 56.

Interacts directly with the sensor histidine kinase ComP and stimulates its activity. Trp-56 is modified by geranylation, which is essential for activity. Modified by the tryptophan prenyltransferase ComQ before export to the extracellular environment. The type of isoprenyl derivative differs among the different pherotypes and depends on ComX primary sequence.

Its subcellular location is the secreted. In terms of biological role, part of a major quorum-sensing system that regulates the development of genetic competence. Acts through the activation of the two-component regulatory system ComP/ComA composed of a sensor histidine kinase, ComP, and a response regulator, ComA. The chain is ComX pheromone from Bacillus spizizenii (Bacillus subtilis subsp. spizizenii).